We begin with the raw amino-acid sequence, 365 residues long: Chorismate synthase (365 aa).

The NADP(+) site is built by Arg-48 and Arg-54. FMN-binding positions include 131–133, 243–244, Gly-288, 303–307, and Arg-329; these read RSS, NA, and KPTSS.

Belongs to the chorismate synthase family. In terms of assembly, homotetramer. Requires FMNH2 as cofactor.

It catalyses the reaction 5-O-(1-carboxyvinyl)-3-phosphoshikimate = chorismate + phosphate. Its pathway is metabolic intermediate biosynthesis; chorismate biosynthesis; chorismate from D-erythrose 4-phosphate and phosphoenolpyruvate: step 7/7. In terms of biological role, catalyzes the anti-1,4-elimination of the C-3 phosphate and the C-6 proR hydrogen from 5-enolpyruvylshikimate-3-phosphate (EPSP) to yield chorismate, which is the branch point compound that serves as the starting substrate for the three terminal pathways of aromatic amino acid biosynthesis. This reaction introduces a second double bond into the aromatic ring system. This Rhizobium etli (strain CIAT 652) protein is Chorismate synthase.